The chain runs to 439 residues: Ribosomal protein uS12 methylthiotransferase RimO (439 aa).

The 111-residue stretch at 6–116 folds into the MTTase N-terminal domain; that stretch reads GKVGFVSLGC…VMNQVHQVAP (111 aa). [4Fe-4S] cluster is bound by residues cysteine 15, cysteine 51, cysteine 80, cysteine 148, cysteine 152, and cysteine 155. The region spanning 134–371 is the Radical SAM core domain; it reads LTPKHYAYLK…MEVQQRISAS (238 aa). The region spanning 374–439 is the TRAM domain; it reads QAKIGKRMDV…DEYDLWGRPV (66 aa).

This sequence belongs to the methylthiotransferase family. RimO subfamily. [4Fe-4S] cluster is required as a cofactor.

Its subcellular location is the cytoplasm. It catalyses the reaction L-aspartate(89)-[ribosomal protein uS12]-hydrogen + (sulfur carrier)-SH + AH2 + 2 S-adenosyl-L-methionine = 3-methylsulfanyl-L-aspartate(89)-[ribosomal protein uS12]-hydrogen + (sulfur carrier)-H + 5'-deoxyadenosine + L-methionine + A + S-adenosyl-L-homocysteine + 2 H(+). Functionally, catalyzes the methylthiolation of an aspartic acid residue of ribosomal protein uS12. This chain is Ribosomal protein uS12 methylthiotransferase RimO, found in Hahella chejuensis (strain KCTC 2396).